Here is a 98-residue protein sequence, read N- to C-terminus: NADH-ubiquinone oxidoreductase chain 4L (98 aa).

3 helical membrane-spanning segments follow: residues Met1–Val21, His25–Thr45, and Ser57–Val79.

It belongs to the complex I subunit 4L family. As to quaternary structure, core subunit of respiratory chain NADH dehydrogenase (Complex I) which is composed of 45 different subunits.

It is found in the mitochondrion inner membrane. The catalysed reaction is a ubiquinone + NADH + 5 H(+)(in) = a ubiquinol + NAD(+) + 4 H(+)(out). Its function is as follows. Core subunit of the mitochondrial membrane respiratory chain NADH dehydrogenase (Complex I) which catalyzes electron transfer from NADH through the respiratory chain, using ubiquinone as an electron acceptor. Part of the enzyme membrane arm which is embedded in the lipid bilayer and involved in proton translocation. The chain is NADH-ubiquinone oxidoreductase chain 4L (MT-ND4L) from Dasyurus hallucatus (Northern quoll).